Reading from the N-terminus, the 230-residue chain is Demethylmenaquinone methyltransferase (230 aa).

Residues T57, D77, 101-102, and S118 contribute to the S-adenosyl-L-methionine site; that span reads DI.

Belongs to the class I-like SAM-binding methyltransferase superfamily. MenG/UbiE family.

The catalysed reaction is a 2-demethylmenaquinol + S-adenosyl-L-methionine = a menaquinol + S-adenosyl-L-homocysteine + H(+). It functions in the pathway quinol/quinone metabolism; menaquinone biosynthesis; menaquinol from 1,4-dihydroxy-2-naphthoate: step 2/2. Its function is as follows. Methyltransferase required for the conversion of demethylmenaquinol (DMKH2) to menaquinol (MKH2). This Chlamydia caviae (strain ATCC VR-813 / DSM 19441 / 03DC25 / GPIC) (Chlamydophila caviae) protein is Demethylmenaquinone methyltransferase.